The sequence spans 376 residues: Beta-centractin (376 aa).

Methionine 1 carries the post-translational modification N-acetylmethionine. Tyrosine 4 bears the 3'-nitrotyrosine mark.

Belongs to the actin family. ARP1 subfamily.

Its subcellular location is the cytoplasm. It is found in the cytoskeleton. The protein localises to the microtubule organizing center. The protein resides in the centrosome. Functionally, component of a multi-subunit complex involved in microtubule based vesicle motility. It is associated with the centrosome. This Homo sapiens (Human) protein is Beta-centractin (ACTR1B).